The primary structure comprises 209 residues: Large ribosomal subunit protein uL3 (209 aa).

The disordered stretch occupies residues 127–151; that stretch reads SGGPSSHGSKFHRHLGGTGQATTPA.

It belongs to the universal ribosomal protein uL3 family. In terms of assembly, part of the 50S ribosomal subunit. Forms a cluster with proteins L14 and L19.

Functionally, one of the primary rRNA binding proteins, it binds directly near the 3'-end of the 23S rRNA, where it nucleates assembly of the 50S subunit. In Borrelia duttonii (strain Ly), this protein is Large ribosomal subunit protein uL3.